We begin with the raw amino-acid sequence, 130 residues long: MIKMAVKFVVVMIVFAQILAPIAEAAQGKAVYYDPPYTRSACYGTQRETLVVGVKNNLWQNGRACGRRYRVRCIGATYNFDRACTGRTVDVKVVDFCREPCNGDLNLSRDAFRVIANTDAGNIRVVYTPI.

An N-terminal signal peptide occupies residues 1 to 25; it reads MIKMAVKFVVVMIVFAQILAPIAEA. The Expansin-like EG45 domain maps to 28 to 130; that stretch reads GKAVYYDPPY…GNIRVVYTPI (103 aa). Asn106 carries an N-linked (GlcNAc...) asparagine glycan.

Expressed in unstressed leaves.

It localises to the secreted. Functionally, plays a systemic role in water and solute homeostasis. This is EG45-like domain containing protein 2 (EGC2) from Arabidopsis thaliana (Mouse-ear cress).